An 860-amino-acid polypeptide reads, in one-letter code: Eukaryotic translation initiation factor 3 subunit C (860 aa).

Positions 1-79 (MSSRFFHGGS…ESDEEEDRVT (79 aa)) are disordered. Composition is skewed to acidic residues over residues 16 to 53 (SSDE…DDEA) and 67 to 76 (DLDESDEEED). A PCI domain is found at 598–772 (FHMHINLELL…NAIVFRKGVE (175 aa)). Residues 808 to 860 (AFQRDQGPGGRLGRGQGRGGQRTAGGRPPIGGQQRRPGGQQFSGGALGGAIKA) form a disordered region. Residues 814 to 830 (GPGGRLGRGQGRGGQRT) show a composition bias toward gly residues. Residues 831–847 (AGGRPPIGGQQRRPGGQ) show a composition bias toward low complexity. A compositionally biased stretch (gly residues) spans 848–860 (QFSGGALGGAIKA).

The protein belongs to the eIF-3 subunit C family. As to quaternary structure, component of the eukaryotic translation initiation factor 3 (eIF-3) complex.

The protein localises to the cytoplasm. Its function is as follows. Component of the eukaryotic translation initiation factor 3 (eIF-3) complex, which is involved in protein synthesis of a specialized repertoire of mRNAs and, together with other initiation factors, stimulates binding of mRNA and methionyl-tRNAi to the 40S ribosome. The eIF-3 complex specifically targets and initiates translation of a subset of mRNAs involved in cell proliferation. The polypeptide is Eukaryotic translation initiation factor 3 subunit C (Coccidioides immitis (strain RS) (Valley fever fungus)).